A 189-amino-acid chain; its full sequence is Riboflavin kinase (189 aa).

Mg(2+) contacts are provided by threonine 42 and asparagine 44. Glutamate 124 (nucleophile) is an active-site residue.

The protein belongs to the flavokinase family. Zn(2+) is required as a cofactor. It depends on Mg(2+) as a cofactor.

It catalyses the reaction riboflavin + ATP = FMN + ADP + H(+). The protein operates within cofactor biosynthesis; FMN biosynthesis; FMN from riboflavin (ATP route): step 1/1. Catalyzes the phosphorylation of riboflavin (vitamin B2) to form flavin mononucleotide (FMN) coenzyme. The protein is Riboflavin kinase (FMN1) of Candida glabrata (strain ATCC 2001 / BCRC 20586 / JCM 3761 / NBRC 0622 / NRRL Y-65 / CBS 138) (Yeast).